The primary structure comprises 143 residues: MSLTARDKSVVNAFWGKIKGKADVVGAEALGRMLTAYPQTKTYFSHWADLSPGSAPVKKHGGVIMGAIGNAVGLMDDLVGGMSGLSDLHAFKLRVDPGNFKILSHNILVTLAIHFPADFTPEVHIAVDKFLAALSAALADKYR.

The Globin domain occupies Ser-2–Arg-143. Position 60 (His-60) interacts with O2. His-89 is a binding site for heme b.

Belongs to the globin family. As to quaternary structure, heterotetramer of two alpha chains and two beta chains. As to expression, red blood cells.

Involved in oxygen transport from gills to the various peripheral tissues. The protein is Hemoglobin subunit alpha (hba) of Salmo salar (Atlantic salmon).